A 102-amino-acid polypeptide reads, in one-letter code: Large ribosomal subunit protein bL21 (102 aa).

The protein belongs to the bacterial ribosomal protein bL21 family. Part of the 50S ribosomal subunit. Contacts protein L20.

In terms of biological role, this protein binds to 23S rRNA in the presence of protein L20. In Nitratiruptor sp. (strain SB155-2), this protein is Large ribosomal subunit protein bL21.